Here is a 63-residue protein sequence, read N- to C-terminus: Large ribosomal subunit protein bL32 (63 aa).

Residues 1-18 (MAHPKAKVSKSRRDKRRA) are compositionally biased toward basic residues. The disordered stretch occupies residues 1 to 25 (MAHPKAKVSKSRRDKRRAQFNARTK).

Belongs to the bacterial ribosomal protein bL32 family.

This Chlorobium phaeovibrioides (strain DSM 265 / 1930) (Prosthecochloris vibrioformis (strain DSM 265)) protein is Large ribosomal subunit protein bL32.